Reading from the N-terminus, the 227-residue chain is Probable septum site-determining protein MinC (227 aa).

The protein belongs to the MinC family. In terms of assembly, interacts with MinD and FtsZ.

Functionally, cell division inhibitor that blocks the formation of polar Z ring septums. Rapidly oscillates between the poles of the cell to destabilize FtsZ filaments that have formed before they mature into polar Z rings. Prevents FtsZ polymerization. This chain is Probable septum site-determining protein MinC, found in Laribacter hongkongensis (strain HLHK9).